The sequence spans 305 residues: Superoxide dismutase [Fe] 2, chloroplastic (305 aa).

The N-terminal 46 residues, 1–46 (MMNVAVTATPSSLLYSPLLLPSQGPNRRMQWKRNGKRRLGTKVAVS), are a transit peptide targeting the chloroplast. Residues histidine 77, histidine 129, aspartate 228, and histidine 232 each coordinate Fe cation. The tract at residues 270 to 305 (AVQREQEGTETEDEENPDDEVPEVYLDSDIDVSEVD) is disordered. Over residues 277 to 305 (GTETEDEENPDDEVPEVYLDSDIDVSEVD) the composition is skewed to acidic residues.

It belongs to the iron/manganese superoxide dismutase family. Heterodimer with FSD3. Interacts with MRL7 and PRDA1. Fe cation serves as cofactor.

It is found in the plastid. Its subcellular location is the chloroplast thylakoid. It catalyses the reaction 2 superoxide + 2 H(+) = H2O2 + O2. With respect to regulation, activated by cpn20/cpn21 (in vitro). Functionally, destroys superoxide anion radicals which are normally produced within the cells and which are toxic to biological systems. Plays important role in chloroplast development, particularly in the maintenance of thylakoids membranes. Seems to act as a heterodimer with FSD3. In Arabidopsis thaliana (Mouse-ear cress), this protein is Superoxide dismutase [Fe] 2, chloroplastic (FSD2).